Reading from the N-terminus, the 115-residue chain is Ig heavy chain V-III region J606 (115 aa).

The Ig-like domain maps to 1–114; it reads EVKLEESGGG…WGQGTLVTVS (114 aa). A disulfide bridge links C22 with C98.

This is Ig heavy chain V-III region J606 from Mus musculus (Mouse).